A 556-amino-acid polypeptide reads, in one-letter code: Olefin beta-lactone synthetase (556 aa).

Residues 187–195 (TSGSTGVPK), 321–326 (TPYGAT), aspartate 430, and arginine 445 each bind ATP.

Belongs to the ATP-dependent AMP-binding enzyme family. In terms of assembly, monomer. Forms a complex with OleB and OleD.

It localises to the cytoplasm. The enzyme catalyses a (2R,3S)-2-alkyl-3-hydroxyalkanoate + ATP = a cis-3-alkyl-4-alkyloxetan-2-one + AMP + diphosphate. Involved in olefin biosynthesis. Catalyzes the conversion of 2-alkyl-3-hydroxyalkanoic acids to beta-lactones in the presence of ATP. In Xanthomonas campestris pv. campestris (strain ATCC 33913 / DSM 3586 / NCPPB 528 / LMG 568 / P 25), this protein is Olefin beta-lactone synthetase.